A 1067-amino-acid polypeptide reads, in one-letter code: SURP and G-patch domain-containing protein 2 (1067 aa).

S93 is modified (phosphoserine). The segment covering 177–189 (KESRDYDLDHPGE) has biased composition (basic and acidic residues). Residues 177 to 199 (KESRDYDLDHPGEVDSVSRSSGQ) are disordered. S206 is modified (phosphoserine). A Glycyl lysine isopeptide (Lys-Gly) (interchain with G-Cter in SUMO2) cross-link involves residue K219. Position 265 is a phosphothreonine (T265). Phosphoserine is present on residues S267 and S586. The stretch at 573–616 (IDQLVMRVIQGRLSPRERTLLLQDPAYWFLSDESSLEYKYYKLK) is one SURP motif 1 repeat. The interval 668-767 (SQGPRGLKAK…CPSANMDAKT (100 aa)) is disordered. A compositionally biased stretch (polar residues) spans 680-691 (TTAQQTSLSSGT). S740 is subject to Phosphoserine. At T744 the chain carries Phosphothreonine. The SURP motif 2 repeat unit spans residues 770–813 (TAEKLARFVAQVGPEIEQFSIENSTDNPDLWFLHDQSSSAFKFY). The segment covering 825–840 (SFQSTGEAGDSVQSPT) has biased composition (polar residues). Disordered stretches follow at residues 825-944 (SFQS…KSLK) and 967-991 (RIAY…EFSQ). Residue S838 is modified to Phosphoserine. Residues 843–856 (KEGKGEPQEGHPEQ) are compositionally biased toward basic and acidic residues. Residues 866–883 (LPEEEEEDEEESEDEGGE) show a composition bias toward acidic residues. Polar residues predominate over residues 919–931 (ASTPGLSQASSGS). Residues 975-984 (GRPIAKKKKP) show a composition bias toward basic residues. The Nuclear localization signal signature appears at 980 to 985 (KKKKPK). The G-patch domain maps to 996–1042 (DKNVGFQMLQKMGWKEGHGLGSLGKGIREPVSVGALSEGEGLGADGP).

It localises to the nucleus. May play a role in mRNA splicing. The protein is SURP and G-patch domain-containing protein 2 (Sugp2) of Mus musculus (Mouse).